The chain runs to 62 residues: Sperm protamine P1 (62 aa).

Positions 1 to 62 (MARYRRHSRS…RRYSRRRRRY (62 aa)) are disordered.

This sequence belongs to the protamine P1 family. As to expression, testis.

It is found in the nucleus. The protein localises to the chromosome. Its function is as follows. Protamines substitute for histones in the chromatin of sperm during the haploid phase of spermatogenesis. They compact sperm DNA into a highly condensed, stable and inactive complex. The sequence is that of Sperm protamine P1 (PRM1) from Sminthopsis longicaudata (Long-tailed dunnart).